A 134-amino-acid chain; its full sequence is Small ribosomal subunit protein uS8c (134 aa).

Belongs to the universal ribosomal protein uS8 family. As to quaternary structure, part of the 30S ribosomal subunit.

Its subcellular location is the plastid. The protein resides in the chloroplast. Its function is as follows. One of the primary rRNA binding proteins, it binds directly to 16S rRNA central domain where it helps coordinate assembly of the platform of the 30S subunit. This Vitis vinifera (Grape) protein is Small ribosomal subunit protein uS8c (rps8).